The primary structure comprises 1536 residues: Alpha-2-macroglobulin (1536 aa).

Positions 1-23 are cleaved as a signal peptide; that stretch reads MGMKRLIFLVFLLISFSLFGGYA. Positions 919–922 form a cross-link, isoglutamyl cysteine thioester (Cys-Gln); sequence CVEQ.

This sequence belongs to the protease inhibitor I39 (alpha-2-macroglobulin) family. Bacterial alpha-2-macroglobulin subfamily.

Functionally, protects the bacterial cell from peptidases. The polypeptide is Alpha-2-macroglobulin (Thermotoga maritima (strain ATCC 43589 / DSM 3109 / JCM 10099 / NBRC 100826 / MSB8)).